We begin with the raw amino-acid sequence, 244 residues long: Adenosylcobinamide-GDP ribazoletransferase (244 aa).

Helical transmembrane passes span 33–53 (WFAVVGLLVGALVAALGWLGA), 57–77 (PWLAALLMLVTWVWVTGGLHL), 109–129 (FAVITLALQLLAKLVLLMLAV), 132–152 (GVGWSALVLLPAWARLGAVWW), and 176–196 (FWLSWLLLAALSAWLAPVLLL).

It belongs to the CobS family. Mg(2+) serves as cofactor.

The protein resides in the cell inner membrane. The enzyme catalyses alpha-ribazole + adenosylcob(III)inamide-GDP = adenosylcob(III)alamin + GMP + H(+). It carries out the reaction alpha-ribazole 5'-phosphate + adenosylcob(III)inamide-GDP = adenosylcob(III)alamin 5'-phosphate + GMP + H(+). It participates in cofactor biosynthesis; adenosylcobalamin biosynthesis; adenosylcobalamin from cob(II)yrinate a,c-diamide: step 7/7. Joins adenosylcobinamide-GDP and alpha-ribazole to generate adenosylcobalamin (Ado-cobalamin). Also synthesizes adenosylcobalamin 5'-phosphate from adenosylcobinamide-GDP and alpha-ribazole 5'-phosphate. This chain is Adenosylcobinamide-GDP ribazoletransferase, found in Laribacter hongkongensis (strain HLHK9).